Here is a 120-residue protein sequence, read N- to C-terminus: Holo-[acyl-carrier-protein] synthase (120 aa).

Residues Asp-6 and Glu-55 each contribute to the Mg(2+) site.

This sequence belongs to the P-Pant transferase superfamily. AcpS family. Requires Mg(2+) as cofactor.

It localises to the cytoplasm. It carries out the reaction apo-[ACP] + CoA = holo-[ACP] + adenosine 3',5'-bisphosphate + H(+). Its function is as follows. Transfers the 4'-phosphopantetheine moiety from coenzyme A to a Ser of acyl-carrier-protein. This chain is Holo-[acyl-carrier-protein] synthase, found in Pelodictyon phaeoclathratiforme (strain DSM 5477 / BU-1).